The following is a 1033-amino-acid chain: Potassium-transporting ATPase alpha chain 2 (1033 aa).

The Cytoplasmic segment spans residues Met1–Pro96. A helical transmembrane segment spans residues Glu97–Ala117. Residues Ile118–Tyr140 lie on the Lumenal side of the membrane. A helical membrane pass occupies residues Leu141–Ala161. Residues Lys162 to Ile297 are Cytoplasmic-facing. A helical transmembrane segment spans residues Glu298–Ile317. At Ile318–Ser329 the chain is on the lumenal side. A helical transmembrane segment spans residues Ile330 to Ala347. The Cytoplasmic portion of the chain corresponds to Thr348–Leu781. Asp385 acts as the 4-aspartylphosphate intermediate in catalysis. 2 residues coordinate Mg(2+): Asp726 and Asp730. The helical transmembrane segment at Lys782 to Val801 threads the bilayer. The Lumenal portion of the chain corresponds to Tyr802–Ile811. Residues Gly812–Ala832 form a helical membrane-spanning segment. Residues Tyr833–Arg852 are Cytoplasmic-facing. The helical transmembrane segment at Leu853 to Phe875 threads the bilayer. At Leu876–Gly927 the chain is on the lumenal side. A helical transmembrane segment spans residues Tyr928–Lys947. Residues Thr948 to Asn961 are Cytoplasmic-facing. Ser952 carries the phosphoserine; by PKA modification. A helical transmembrane segment spans residues Lys962–Cys980. The Lumenal segment spans residues Gly981 to Val995. Residues Gln996–Lys1016 traverse the membrane as a helical segment. Residues Leu1017–Tyr1033 lie on the Cytoplasmic side of the membrane.

The protein belongs to the cation transport ATPase (P-type) (TC 3.A.3) family. Type IIC subfamily. Composed of two subunits: alpha (catalytic) and beta. As to expression, found in skin, kidney and distal colon.

Its subcellular location is the membrane. It catalyses the reaction K(+)(out) + ATP + H2O + H(+)(in) = K(+)(in) + ADP + phosphate + 2 H(+)(out). Catalyzes the hydrolysis of ATP coupled with the exchange of H(+) and K(+) ions across the plasma membrane. Responsible for potassium absorption in various tissues. This is Potassium-transporting ATPase alpha chain 2 (ATP12A) from Cavia porcellus (Guinea pig).